The sequence spans 332 residues: Tryptophan--tRNA ligase (332 aa).

Residues 13–15 (KPS) and 21–22 (GN) each bind ATP. Residues 14–22 (PSGDLTLGN) carry the 'HIGH' region motif. Position 137 (aspartate 137) interacts with L-tryptophan. Residues 149–151 (GKD), isoleucine 188, and 197–201 (KMSKS) contribute to the ATP site. A 'KMSKS' region motif is present at residues 197-201 (KMSKS).

This sequence belongs to the class-I aminoacyl-tRNA synthetase family. As to quaternary structure, homodimer.

The protein resides in the cytoplasm. The catalysed reaction is tRNA(Trp) + L-tryptophan + ATP = L-tryptophyl-tRNA(Trp) + AMP + diphosphate + H(+). In terms of biological role, catalyzes the attachment of tryptophan to tRNA(Trp). This Clostridium perfringens (strain 13 / Type A) protein is Tryptophan--tRNA ligase.